Here is a 539-residue protein sequence, read N- to C-terminus: Alpha-aminoadipic semialdehyde dehydrogenase (539 aa).

A mitochondrion-targeting transit peptide spans 1–26 (MWRVPRRLCVQSVKTSKLSGPWSRPA). K86, K94, and K97 each carry N6-acetyllysine; alternate. 3 positions are modified to N6-succinyllysine; alternate: K86, K94, and K97. NAD(+)-binding positions include 192–194 (TAF), K218, 258–259 (GT), 274–275 (GS), 274–279 (GSTQVG), and 296–297 (EL). The active-site Proton acceptor is the E296. Residue C330 is the Nucleophile of the active site. Residue T331 coordinates (S)-2-amino-6-oxohexanoate. E427 is a binding site for NAD(+). The residue at position 462 (K462) is an N6-acetyllysine. Positions 489 and 490 each coordinate (S)-2-amino-6-oxohexanoate. An N6-acetyllysine modification is found at K500. K537 is subject to N6-succinyllysine.

It belongs to the aldehyde dehydrogenase family. Homotetramer. As to expression, present in liver, kidney, brain and pancreas, and at lower levels in jejunum, duodenum, stomach and testes (at protein level).

Its subcellular location is the cytoplasm. It is found in the cytosol. It localises to the nucleus. The protein resides in the mitochondrion. The enzyme catalyses nonanal + NAD(+) + H2O = nonanoate + NADH + 2 H(+). The catalysed reaction is (S)-2-amino-6-oxohexanoate + NAD(+) + H2O = L-2-aminoadipate + NADH + 2 H(+). It carries out the reaction betaine aldehyde + NAD(+) + H2O = glycine betaine + NADH + 2 H(+). It catalyses the reaction an aldehyde + NAD(+) + H2O = a carboxylate + NADH + 2 H(+). The enzyme catalyses hexanal + NAD(+) + H2O = hexanoate + NADH + 2 H(+). The catalysed reaction is octanal + NAD(+) + H2O = octanoate + NADH + 2 H(+). It carries out the reaction (E)-non-2-enal + NAD(+) + H2O = (E)-non-2-enoate + NADH + 2 H(+). It catalyses the reaction (E)-4-hydroxynon-2-enal + NAD(+) + H2O = (E)-4-hydroxynon-2-enoate + NADH + 2 H(+). Its pathway is amine and polyamine biosynthesis; betaine biosynthesis via choline pathway; betaine from betaine aldehyde: step 1/1. In terms of biological role, multifunctional enzyme mediating important protective effects. Metabolizes betaine aldehyde to betaine, an important cellular osmolyte and methyl donor. Protects cells from oxidative stress by metabolizing a number of lipid peroxidation-derived aldehydes. Involved in lysine catabolism. This chain is Alpha-aminoadipic semialdehyde dehydrogenase, found in Mus musculus (Mouse).